The sequence spans 1550 residues: Adhesion G protein-coupled receptor L3 (1550 aa).

The first 19 residues, 1-19 (MCPPQLFILMMLLAPVVHG), serve as a signal peptide directing secretion. The Extracellular portion of the chain corresponds to 20 to 948 (GKHNERHPAL…VHDLLLDVIT (929 aa)). Residues 34 to 80 (RHAEHSPGGPLPPRHLLQQPAAERSTAHRGQGPRGTARGVRGPGAPG) form a disordered region. One can recognise an SUEL-type lectin domain in the interval 103–192 (SCESYPIELR…KYLEVQYECV (90 aa)). Disulfide bonds link C104-C134, C113-C191, C146-C178, C159-C165, and C203-C385. A glycan (N-linked (GlcNAc...) asparagine) is linked at N161. In terms of domain architecture, Olfactomedin-like spans 202–461 (LCPGLLKGVY…VVKYSLDFGP (260 aa)). Positions 317–347 (YHDTSPYRWGGKSDIDLAVDENGLWVIYATE) are interaction with FLRT3. Ca(2+)-binding residues include D332, N380, A381, and V435. Positions 518–538 (NLGRSTTPSLPGRRNRSTSTP) are disordered. 5 N-linked (GlcNAc...) asparagine glycosylation sites follow: N532, N616, N839, N884, and N910. The region spanning 755 to 934 (DIVRENTDNI…AVLMAHVEVK (180 aa)) is the GAIN-B domain. 2 disulfide bridges follow: C885-C916 and C904-C918. The tract at residues 885 to 934 (CSFWSYSKRTMTGYWSTQGCRLLTTNKTHTTCSCNHLTNFAVLMAHVEVK) is GPS. The stachel stretch occupies residues 922–938 (TNFAVLMAHVEVKHSDA). A helical membrane pass occupies residues 949–969 (WVGILLSLVCLLICIFTFCFF). At 970-977 (RGLQSDRN) the chain is on the cytoplasmic side. Residues 978–998 (TIHKNLCISLFVAELLFLIGI) form a helical membrane-spanning segment. N-linked (GlcNAc...) asparagine glycosylation occurs at N999. Residues 999–1006 (NRTDQPIA) are Extracellular-facing. Residues 1007–1027 (CAVFAALLHFFFLAAFTWMFL) traverse the membrane as a helical segment. Topologically, residues 1028–1048 (EGVQLYIMLVEVFESEHSRRK) are cytoplasmic. Residues 1049–1069 (YFYLVGYGMPALIVAVSAAVD) form a helical membrane-spanning segment. At 1070–1087 (YRSYGTDKVCWLRLDTYF) the chain is on the extracellular side. A helical membrane pass occupies residues 1088-1108 (IWSFIGPATLIIMLNVIFLGI). Residues 1109 to 1141 (ALYKMFHHTAILKPESGCLDNINYEDNRPFIKS) lie on the Cytoplasmic side of the membrane. The helical transmembrane segment at 1142 to 1162 (WVIGAIALLCLLGLTWAFGLM) threads the bilayer. Topologically, residues 1163 to 1168 (YINEST) are extracellular. The N-linked (GlcNAc...) asparagine glycan is linked to N1165. The chain crosses the membrane as a helical span at residues 1169 to 1189 (VIMAYLFTIFNSLQGMFIFIF). Residues 1190–1550 (HCVLQKKVRK…KGPAHLVTSL (361 aa)) lie on the Cytoplasmic side of the membrane. The interval 1213 to 1236 (KSTESSIGSGKTSGSRTPGRYSTG) is disordered. S1253 carries the phosphoserine modification. 2 disordered regions span residues 1410–1435 (LLPP…PQDH) and 1528–1550 (PPNK…VTSL). S1535 carries the phosphoserine modification. The PDZ-binding motif lies at 1545 to 1550 (HLVTSL).

It belongs to the G-protein coupled receptor 2 family. LN-TM7 subfamily. As to quaternary structure, heterodimer of 2 chains generated by proteolytic processing; the large extracellular N-terminal fragment and the membrane-bound C-terminal fragment predominantly remain associated and non-covalently linked. Interacts (via olfactomedin-like domain) with FLRT1 (via extracellular domain). Interacts (via olfactomedin-like domain) with FLRT2 (via extracellular domain). Interacts (via olfactomedin-like domain) with FLRT3 (via extracellular domain); the interaction is direct. Interacts (via extracellular domain) with TENM1. Interacts (via extracellular domain) with TENM2. Interacts (via extracellular domain) with TENM3. Identified in a complex with FLRT3 and UNC5B; does not interact with UNC5B by itself. Identified in a complex with FLRT3 and UNC5D; does not interact with UNC5D by itself. In terms of assembly, interacts (via PDZ-binding motif) with SHANK3. Interacts (via PDZ-binding motif) with DLG4. Autoproteolytically processed at the GPS region of the GAIN-B domain; this cleavage modulates receptor activity. Predominantly expressed in brain, followed by heart, placenta, pancreas, kidney and testis.

It localises to the cell membrane. The protein resides in the postsynaptic cell membrane. Its subcellular location is the cell projection. It is found in the axon. The protein localises to the cell junction. Its activity is regulated as follows. Forms a heterodimer of 2 chains generated by proteolytic processing that remain associated through non-covalent interactions mediated by the GAIN-B domain. In the inactivated receptor, the Stachel sequence (also named stalk) is embedded in the GAIN-B domain, where it adopts a beta-strand conformation. On activation, the Stachel moves into the 7 transmembrane region and adopts a twisted hook-shaped configuration that forms contacts within the receptor, leading to coupling of a G-alpha protein, which activates signaling. The cleaved GAIN-B and N-terminal domains can then dissociate from the rest of the receptor. Its function is as follows. Orphan adhesion G-protein coupled receptor (aGPCR), which mediates synapse specificity. Ligand binding causes a conformation change that triggers signaling via guanine nucleotide-binding proteins (G proteins) and modulates the activity of downstream effectors. ADGRL3 is coupled with different classes of G alpha proteins, such as G(12)/G(13), G(s), G(i) or G(q), depending on the context. Coupling to G(12)/G(13) G proteins, which mediates the activation Rho small GTPases is the most efficient. Following G-protein coupled receptor activation, associates with cell adhesion molecules that are expressed at the surface of adjacent cells to direct synapse specificity. Specifically mediates the establishment of Schaffer-collateral synapses formed by CA3-region axons on CA1-region pyramidal neurons in the hippocampus. Localizes to postsynaptic spines in excitatory synapses in the S.oriens and S.radiatum and interacts with presynaptic cell adhesion molecules FLRT3 and TENM2, promoting synapse formation. Plays a role in the development of glutamatergic synapses in the cortex. Important in determining the connectivity rates between the principal neurons in the cortex. In terms of biological role, orphan adhesion G-protein coupled receptor (aGPCR), which mediates synapse specificity. Ligand binding causes a conformation change that triggers signaling via guanine nucleotide-binding proteins (G proteins) and modulates the activity of downstream effectors, such as adenylate cyclase. Isoform 1 is specifically coupled to G(s) G proteins and mediates activation of adenylate cyclase activity. Following G-protein coupled receptor activation, undergoes liquid-liquid phase transition, associates with (1) cell adhesion molecules that are expressed at the surface of adjacent cells, as well as (2) PDZ-containing proteins, such as SHANK3 and DLG4, in the cytoplasm to direct synapse formation. This chain is Adhesion G protein-coupled receptor L3, found in Rattus norvegicus (Rat).